The sequence spans 96 residues: Large ribosomal subunit protein bL28 (96 aa).

Belongs to the bacterial ribosomal protein bL28 family.

This Methylobacterium sp. (strain 4-46) protein is Large ribosomal subunit protein bL28.